Consider the following 155-residue polypeptide: DNA-binding protein inhibitor ID-1 (155 aa).

Positions 53–105 constitute a bHLH domain; it reads LPALLDEQQVNVLLYDMNGCYSRLKELVPTLPQNRKVSKVEILQHVIDYIRDL. The Nuclear export signal signature appears at 98–111; it reads VIDYIRDLQLELNS.

In terms of assembly, heterodimer with other HLH proteins. Interacts with COPS5, IFI204, GATA4 and NKX2-5. Interacts with CLOCK and BMAL1.

It is found in the cytoplasm. The protein resides in the nucleus. Transcriptional regulator (lacking a basic DNA binding domain) which negatively regulates the basic helix-loop-helix (bHLH) transcription factors by forming heterodimers and inhibiting their DNA binding and transcriptional activity. Implicated in regulating a variety of cellular processes, including cellular growth, senescence, differentiation, apoptosis, angiogenesis, and neoplastic transformation. Inhibits skeletal muscle and cardiac myocyte differentiation. Regulates the circadian clock by repressing the transcriptional activator activity of the CLOCK-BMAL1 heterodimer. This Homo sapiens (Human) protein is DNA-binding protein inhibitor ID-1 (ID1).